Here is a 116-residue protein sequence, read N- to C-terminus: Integration host factor subunit alpha (116 aa).

Disordered stretches follow at residues 58 to 80 (FGNF…GETI) and 94 to 116 (QKLK…EAAE). Positions 94–105 (QKLKSTVEQSGN) are enriched in polar residues.

The protein belongs to the bacterial histone-like protein family. In terms of assembly, heterodimer of an alpha and a beta chain.

Functionally, this protein is one of the two subunits of integration host factor, a specific DNA-binding protein that functions in genetic recombination as well as in transcriptional and translational control. The chain is Integration host factor subunit alpha from Bordetella avium (strain 197N).